A 175-amino-acid polypeptide reads, in one-letter code: Putative lipoprotein LppN (175 aa).

The signal sequence occupies residues 1–20 (MRLPGRHVLYALSAVTMLAA). Cysteine 21 is lipidated: N-palmitoyl cysteine. Cysteine 21 is lipidated: S-diacylglycerol cysteine. The disordered stretch occupies residues 31-56 (ASTNMNPTNPPATAETATVSPTPAPQ). Low complexity predominate over residues 33-48 (TNMNPTNPPATAETAT). 3 prevents bacterial uptake by a human macrophage-like cell line regions span residues 61–80 (ETWI…PADL), 101–120 (RAPV…DCAA), and 121–140 (GFAP…VAYL).

The protein resides in the cell membrane. Its subcellular location is the cell surface. Its function is as follows. Probably involved in bacterial recognition and uptake by its host (human). This Mycobacterium tuberculosis (strain ATCC 25618 / H37Rv) protein is Putative lipoprotein LppN (lppN).